The primary structure comprises 527 residues: N-acetylglutamate synthase, mitochondrial (527 aa).

The transit peptide at 1–18 (MATAWVATALRSAAAARR) directs the protein to the mitochondrion. The segment at 14–91 (AAARRLRSPG…PLESPAPPAG (78 aa)) is disordered. The amino-acid kinase domain (AAK) stretch occupies residues 19 to 369 (LRSPGGPGGS…CGTLFKNAER (351 aa)). Positions 54–63 (AHAEDAEGAK) are enriched in basic and acidic residues. The segment covering 77–89 (TPLPTPLESPAPP) has biased composition (pro residues). Positions 368 to 519 (ERMLRVRNLD…HAKGLPDSFC (152 aa)) constitute an N-acetyltransferase domain. Residues K394, K437, and 467-472 (RSRVTN) each bind substrate.

It belongs to the acetyltransferase family. Homodimer. Homotetramer. Post-translationally, probably processed by mitochondrial processing peptidase (MPP). The long form has not yet been isolated. As to expression, highly expressed in the liver and small intestine. Weakly expressed in the kidney, spleen and testis.

The protein resides in the mitochondrion matrix. It catalyses the reaction L-glutamate + acetyl-CoA = N-acetyl-L-glutamate + CoA + H(+). The protein operates within amino-acid biosynthesis; L-arginine biosynthesis; N(2)-acetyl-L-ornithine from L-glutamate: step 1/4. Increased by L-arginine. Plays a role in the regulation of ureagenesis by producing the essential cofactor N-acetylglutamate (NAG), thus modulating carbamoylphosphate synthase I (CPS1) activity. This Mus musculus (Mouse) protein is N-acetylglutamate synthase, mitochondrial (Nags).